The following is a 715-amino-acid chain: Polyribonucleotide nucleotidyltransferase (715 aa).

Positions 493 and 499 each coordinate Mg(2+). The region spanning 560–619 (PRMITIKINPEKIRDVIGKGGSVIRALTEETGTTIDISDDGVVTIASTNSDGMAEAKKRI) is the KH domain. Residues 629–697 (GQVYEGTVLK…EKGRVRLSAK (69 aa)) enclose the S1 motif domain.

This sequence belongs to the polyribonucleotide nucleotidyltransferase family. Mg(2+) serves as cofactor.

The protein localises to the cytoplasm. It catalyses the reaction RNA(n+1) + phosphate = RNA(n) + a ribonucleoside 5'-diphosphate. Its function is as follows. Involved in mRNA degradation. Catalyzes the phosphorolysis of single-stranded polyribonucleotides processively in the 3'- to 5'-direction. This chain is Polyribonucleotide nucleotidyltransferase, found in Burkholderia lata (strain ATCC 17760 / DSM 23089 / LMG 22485 / NCIMB 9086 / R18194 / 383).